The sequence spans 341 residues: Biotin synthase (341 aa).

One can recognise a Radical SAM core domain in the interval 53 to 272 (NHVETASLLS…IAVARIMMPK (220 aa)). The [4Fe-4S] cluster site is built by Cys-68, Cys-72, and Cys-75. [2Fe-2S] cluster-binding residues include Cys-112, Cys-143, Cys-203, and Arg-276.

It belongs to the radical SAM superfamily. Biotin synthase family. Homodimer. The cofactor is [4Fe-4S] cluster. It depends on [2Fe-2S] cluster as a cofactor.

It carries out the reaction (4R,5S)-dethiobiotin + (sulfur carrier)-SH + 2 reduced [2Fe-2S]-[ferredoxin] + 2 S-adenosyl-L-methionine = (sulfur carrier)-H + biotin + 2 5'-deoxyadenosine + 2 L-methionine + 2 oxidized [2Fe-2S]-[ferredoxin]. It functions in the pathway cofactor biosynthesis; biotin biosynthesis; biotin from 7,8-diaminononanoate: step 2/2. In terms of biological role, catalyzes the conversion of dethiobiotin (DTB) to biotin by the insertion of a sulfur atom into dethiobiotin via a radical-based mechanism. This is Biotin synthase from Nitrobacter winogradskyi (strain ATCC 25391 / DSM 10237 / CIP 104748 / NCIMB 11846 / Nb-255).